Consider the following 363-residue polypeptide: Heme A synthase (363 aa).

8 consecutive transmembrane segments (helical) span residues 21–41, 107–127, 138–158, 174–194, 207–227, 268–288, 301–321, and 323–343; these read ALVR…VLVG, RLLA…FWVS, LVGI…MVAS, HLTL…GLAP, LAGF…LVAG, FVHR…MIAT, ATLL…TLLM, and VPLH…GFAA. Residue H270 participates in heme binding. Position 331 (H331) interacts with heme.

Belongs to the COX15/CtaA family. Type 2 subfamily. In terms of assembly, interacts with CtaB. Requires heme b as cofactor.

It is found in the cell membrane. The catalysed reaction is Fe(II)-heme o + 2 A + H2O = Fe(II)-heme a + 2 AH2. Its pathway is porphyrin-containing compound metabolism; heme A biosynthesis; heme A from heme O: step 1/1. Functionally, catalyzes the conversion of heme O to heme A by two successive hydroxylations of the methyl group at C8. The first hydroxylation forms heme I, the second hydroxylation results in an unstable dihydroxymethyl group, which spontaneously dehydrates, resulting in the formyl group of heme A. The polypeptide is Heme A synthase (Mesorhizobium japonicum (strain LMG 29417 / CECT 9101 / MAFF 303099) (Mesorhizobium loti (strain MAFF 303099))).